Here is a 471-residue protein sequence, read N- to C-terminus: V-type ATP synthase beta chain (471 aa).

The protein belongs to the ATPase alpha/beta chains family.

Its function is as follows. Produces ATP from ADP in the presence of a proton gradient across the membrane. The V-type beta chain is a regulatory subunit. This Deinococcus deserti (strain DSM 17065 / CIP 109153 / LMG 22923 / VCD115) protein is V-type ATP synthase beta chain.